The sequence spans 295 residues: Replication-associated protein A (295 aa).

The segment at 1–31 (MSSLPVSESEGEGSGTSVQVPSRGGQVTPGE) is disordered. Residues 35 to 138 (SLRTKHVFLT…PESSWEFGKF (104 aa)) enclose the CRESS-DNA virus Rep endonuclease domain. The RCR-1 signature appears at 42-45 (FLTY). A divalent metal cation-binding residues include E76, H84, and H86. The RCR-2 signature appears at 84–86 (HLH). Y124 acts as the For DNA cleavage activity in catalysis. An RCR-3 motif is present at residues 124–127 (YCMK). Positions 192–204 (SANALFPDPPQTY) are oligomerization.

Belongs to the geminiviridae Rep protein family. As to quaternary structure, homooligomer. Part of the C- and V-complexes which are RepA-Rep-DNA complexes involved in the c-sense and v-sense transcription.

It is found in the host nucleus. The protein localises to the host cytoplasm. Implicated in enhancement of V-sense gene expression. Acts a an inhibitor of C-sense gene transcription. This Avena sativa (Oat) protein is Replication-associated protein A.